Here is a 336-residue protein sequence, read N- to C-terminus: D-alanine--D-alanine ligase (336 aa).

In terms of domain architecture, ATP-grasp spans 124-330 (KMWFSALGIP…FTEYLSLVIN (207 aa)). 154-209 (ALENWGSIFVKAASQGSSVGCYKVDDSSKVAGVLKDAFGYAPYVIVEKTIKARELE) is an ATP binding site. Mg(2+) is bound by residues aspartate 284, glutamate 297, and asparagine 299.

The protein belongs to the D-alanine--D-alanine ligase family. The cofactor is Mg(2+). Requires Mn(2+) as cofactor.

The protein localises to the cytoplasm. It carries out the reaction 2 D-alanine + ATP = D-alanyl-D-alanine + ADP + phosphate + H(+). The protein operates within cell wall biogenesis; peptidoglycan biosynthesis. Cell wall formation. This Shewanella sp. (strain MR-4) protein is D-alanine--D-alanine ligase.